A 1625-amino-acid chain; its full sequence is E3 ubiquitin-protein ligase KEG (1625 aa).

The RING-type zinc-finger motif lies at 10 to 56; it reads CSVCHTRYNEDERVPLLLQCGHGFCKDCLSKMFSTSSDTTLTCPRCR. Residues 91-106 are compositionally biased toward acidic residues; sequence YTDDEDDDDEEDGSDE. A disordered region spans residues 91 to 110; it reads YTDDEDDDDEEDGSDEDGAR. Residues 141–427 enclose the Protein kinase domain; sequence RQIGEESSSG…TFNAMLATFL (287 aa). ATP-binding positions include 147–155 and lysine 176; that span reads SSSGGFGGV. ANK repeat units lie at residues 467–496, 510–540, 544–573, 579–608, 612–641, 647–676, 685–720, 725–754, 758–787, 791–826, and 832–863; these read DNPN…AGGG, DGQS…NVDI, DGDP…NVRS, SGPS…DPNA, EGET…SRSM, KCLT…PEEI, PVGT…DPTA, HGRT…NANI, HNTI…DCNI, EGDN…AVDV, and KTVR…HLSP.

In terms of assembly, interacts with ABI5 and EDR1. Autophosphotylated and autoubiquitinated in vitro. In terms of processing, phosphorylation enhances self-ubiquitination. Post-translationally, autoubiquitinated in response to abscisic acid (ABA) and subsequently targeted to proteolysis. In terms of tissue distribution, expressed in all tissues of young seedlings. In flowering plants, only detected in the youngest part of the stem, anthers and the receptacle of immature siliques. Not found in mature leave, older parts of the stem, flower parts other than anthers or mature siliques.

The protein localises to the golgi apparatus. Its subcellular location is the trans-Golgi network. The protein resides in the early endosome. The catalysed reaction is L-seryl-[protein] + ATP = O-phospho-L-seryl-[protein] + ADP + H(+). It carries out the reaction L-threonyl-[protein] + ATP = O-phospho-L-threonyl-[protein] + ADP + H(+). It catalyses the reaction S-ubiquitinyl-[E2 ubiquitin-conjugating enzyme]-L-cysteine + [acceptor protein]-L-lysine = [E2 ubiquitin-conjugating enzyme]-L-cysteine + N(6)-ubiquitinyl-[acceptor protein]-L-lysine.. Its pathway is protein modification; protein ubiquitination. In terms of biological role, mediates E2-dependent protein ubiquitination. Acts as a negative regulator of abscisic acid signaling. Required for ABI5 degradation, by mediating its ubiquitination. Together with EDR1, may regulate endocytic trafficking and/or the formation of signaling complexes on trans-Golgi network (TGN)/ early endosome (EE) vesicles during stress responses. The polypeptide is E3 ubiquitin-protein ligase KEG (KEG) (Arabidopsis thaliana (Mouse-ear cress)).